The following is a 655-amino-acid chain: Putative esterase (655 aa).

The helical transmembrane segment at 9–29 (VLSLTLIYISISIGFSVYFYV) threads the bilayer. N-linked (GlcNAc...) asparagine; by host glycans are attached at residues Asn-71, Asn-89, Asn-101, Asn-185, Asn-386, Asn-449, and Asn-512. His-515 acts as the Charge relay system in catalysis. Asn-527 and Asn-597 each carry an N-linked (GlcNAc...) asparagine; by host glycan.

Belongs to the type-B carboxylesterase/lipase family.

It localises to the membrane. The enzyme catalyses a carboxylic ester + H2O = an alcohol + a carboxylate + H(+). This is Putative esterase from Noctuidae (owlet moths).